Here is a 554-residue protein sequence, read N- to C-terminus: Glucose-6-phosphate isomerase (554 aa).

Glutamate 359 (proton donor) is an active-site residue. Residues histidine 390 and lysine 518 contribute to the active site.

The protein belongs to the GPI family.

The protein resides in the cytoplasm. The catalysed reaction is alpha-D-glucose 6-phosphate = beta-D-fructose 6-phosphate. It functions in the pathway carbohydrate biosynthesis; gluconeogenesis. It participates in carbohydrate degradation; glycolysis; D-glyceraldehyde 3-phosphate and glycerone phosphate from D-glucose: step 2/4. Catalyzes the reversible isomerization of glucose-6-phosphate to fructose-6-phosphate. The polypeptide is Glucose-6-phosphate isomerase (Pseudomonas savastanoi pv. phaseolicola (strain 1448A / Race 6) (Pseudomonas syringae pv. phaseolicola (strain 1448A / Race 6))).